The chain runs to 213 residues: Mite allergen Der f 7 (213 aa).

The first 17 residues, 1–17, serve as a signal peptide directing secretion; it reads MMKFLLIAAVAFVAVSA. An N-linked (GlcNAc...) asparagine glycan is attached at Asn151.

The protein belongs to the mite group 7 allergen family.

It is found in the secreted. This chain is Mite allergen Der f 7 (DERF7), found in Dermatophagoides farinae (American house dust mite).